The primary structure comprises 99 residues: UPF0386 protein mll0189 (99 aa).

This sequence belongs to the UPF0386 family.

In Mesorhizobium japonicum (strain LMG 29417 / CECT 9101 / MAFF 303099) (Mesorhizobium loti (strain MAFF 303099)), this protein is UPF0386 protein mll0189.